The following is a 364-amino-acid chain: GDP-perosamine synthase (364 aa).

K183 is modified (N6-(pyridoxal phosphate)lysine).

Belongs to the DegT/DnrJ/EryC1 family. In terms of assembly, homodecamer. Pyridoxal 5'-phosphate serves as cofactor.

The catalysed reaction is GDP-alpha-D-perosamine + 2-oxoglutarate = GDP-4-dehydro-alpha-D-rhamnose + L-glutamate. It functions in the pathway bacterial outer membrane biogenesis; LPS O-antigen biosynthesis. Divalent ions have no significant effect on activity. In terms of biological role, catalyzes the synthesis of GDP-perosamine from GDP-4-keto-6-deoxy-D-mannose and L-glutamate. Can use only L-glutamate as amino donor. In Escherichia coli O157:H7, this protein is GDP-perosamine synthase.